The following is a 643-amino-acid chain: Pescadillo homolog (643 aa).

Residues 319–412 (KLKTLFKGLK…RLLPTNKYFM (94 aa)) enclose the BRCT domain. 3 disordered regions span residues 437–475 (AARKAAEGEEEEETFEPAEVNADHEHISDDEEVQDPENE), 492–571 (TDSL…YREN), and 609–643 (DKNARLLANKRERIEKQKRAEQMEKQKQQRKQILA). Positions 464 to 475 (SDDEEVQDPENE) are enriched in acidic residues. Residues 492 to 518 (TDSLNSGKKEGADDATDNGKDAAEKKQ) are compositionally biased toward basic and acidic residues. Over residues 524–544 (GESDDEDEEEEDDDDGEEEED) the composition is skewed to acidic residues. The stretch at 569 to 643 (RENEAEKKIV…QKQQRKQILA (75 aa)) forms a coiled coil. The span at 609–635 (DKNARLLANKRERIEKQKRAEQMEKQK) shows a compositional bias: basic and acidic residues.

This sequence belongs to the pescadillo family.

It is found in the nucleus. The protein localises to the nucleolus. The protein resides in the nucleoplasm. Required for maturation of ribosomal RNAs and formation of the large ribosomal subunit. This chain is Pescadillo homolog, found in Anopheles gambiae (African malaria mosquito).